Reading from the N-terminus, the 389-residue chain is Chromobox protein homolog 8 (389 aa).

One can recognise a Chromo domain in the interval 11 to 69 (FAAEALLKRRIRKGRMEYLVKWKGWSQKYSTWEPEENILDARLLAAFEEREREMELYGP). A phosphoserine mark is found at serine 110 and serine 130. The segment at 124-241 (LRNMGLSPPA…DDTPSGAGKF (118 aa)) is disordered. A compositionally biased stretch (basic and acidic residues) spans 145-189 (EAPRDRDRDRDRDRERDRERERERERERERERERERGTSRVDDKP). Phosphoserine is present on residues serine 191, serine 256, serine 265, serine 311, serine 332, and serine 352. Positions 298–327 (GALDPNGTRVRHGSGPPSSGGGLYRDMGAQ) are disordered.

As to quaternary structure, component of a PRC1-like complex. Interacts with RING1 RNF2, PCGF1, PCGF2, PCGF3, BMI1, PCGF5 and PCGF6. Interacts with MLLT3 and histone H3. Interacts with PHC2.

The protein localises to the nucleus. Functionally, component of a Polycomb group (PcG) multiprotein PRC1-like complex, a complex class required to maintain the transcriptionally repressive state of many genes, including Hox genes, throughout development. PcG PRC1 complex acts via chromatin remodeling and modification of histones; it mediates monoubiquitination of histone H2A 'Lys-119', rendering chromatin heritably changed in its expressibility. This is Chromobox protein homolog 8 (CBX8) from Homo sapiens (Human).